Reading from the N-terminus, the 263-residue chain is Hydroxyethylthiazole kinase (263 aa).

Methionine 39 contributes to the substrate binding site. ATP-binding residues include lysine 115 and threonine 160. Substrate is bound at residue glycine 187.

This sequence belongs to the Thz kinase family. Requires Mg(2+) as cofactor.

The enzyme catalyses 5-(2-hydroxyethyl)-4-methylthiazole + ATP = 4-methyl-5-(2-phosphooxyethyl)-thiazole + ADP + H(+). The protein operates within cofactor biosynthesis; thiamine diphosphate biosynthesis; 4-methyl-5-(2-phosphoethyl)-thiazole from 5-(2-hydroxyethyl)-4-methylthiazole: step 1/1. In terms of biological role, catalyzes the phosphorylation of the hydroxyl group of 4-methyl-5-beta-hydroxyethylthiazole (THZ). The chain is Hydroxyethylthiazole kinase from Staphylococcus saprophyticus subsp. saprophyticus (strain ATCC 15305 / DSM 20229 / NCIMB 8711 / NCTC 7292 / S-41).